A 565-amino-acid chain; its full sequence is Deformed epidermal autoregulatory factor 1 homolog (565 aa).

Disordered stretches follow at residues 34–62 (GGEA…ETPR) and 162–190 (GLKG…KGGT). A compositionally biased stretch (pro residues) spans 169 to 181 (PLTPGPQSPPTPL). Thr-171 carries the phosphothreonine modification. Phosphoserine is present on Ser-176. Thr-179 bears the Phosphothreonine mark. The SAND domain occupies 193-273 (NWDPSVYDSE…QCLIQDGILN (81 aa)). The Nuclear localization signal signature appears at 301–316 (KRRKKENELPTTPVKK). The tract at residues 403–478 (IAPFPEAALP…QLKTLFEQAK (76 aa)) is interaction with LMO4. At Thr-432 the chain carries Phosphothreonine. Phosphoserine is present on Ser-448. Cys-504, Cys-507, Cys-515, Cys-518, Cys-524, Cys-528, His-536, and Cys-540 together coordinate Zn(2+). Residues 504-540 (CVNCGREAMNECTGCHKVNYCSTFCQRKDWKDHQHIC) form an MYND-type zinc finger.

In terms of assembly, homodimer. Interacts with LMO4; LMO4 blocks export from nucleus. Interacts with LMO2 and CLIM2. May interact with the corepressors NCOR1 and NCRO2. Identified in a complex with XRCC5 and XRCC6. Interacts (via the SAND domain) with the DNA-PK complex subunit XRCC6; the interaction is direct and may be inhibited by DNA-binding. May be phosphorylated by DNA-PK complex in a DNA independent manner (in vitro).

The protein localises to the nucleus. Functionally, transcription factor that binds to sequence with multiple copies of 5'-TTC[CG]G-3' present in its own promoter and that of the HNRPA2B1 gene. Down-regulates transcription of these genes. Binds to the retinoic acid response element (RARE) 5'-AGGGTTCACCGAAAGTTCA-3'. Activates the proenkephalin gene independently of promoter binding, probably through protein-protein interaction. Regulates epithelial cell proliferation and side-branching in the mammary gland. Required for neural tube closure and skeletal patterning. Controls the expression of peripheral tissue antigens in pancreatic lymph nodes. Transcriptional activator of EIF4G3. May also involved in behavior. In Pan troglodytes (Chimpanzee), this protein is Deformed epidermal autoregulatory factor 1 homolog (DEAF1).